A 219-amino-acid chain; its full sequence is Protein-L-isoaspartate O-methyltransferase (219 aa).

S66 is a catalytic residue.

It belongs to the methyltransferase superfamily. L-isoaspartyl/D-aspartyl protein methyltransferase family.

Its subcellular location is the cytoplasm. The catalysed reaction is [protein]-L-isoaspartate + S-adenosyl-L-methionine = [protein]-L-isoaspartate alpha-methyl ester + S-adenosyl-L-homocysteine. Its function is as follows. Catalyzes the methyl esterification of L-isoaspartyl residues in peptides and proteins that result from spontaneous decomposition of normal L-aspartyl and L-asparaginyl residues. It plays a role in the repair and/or degradation of damaged proteins. In Xanthobacter autotrophicus (strain ATCC BAA-1158 / Py2), this protein is Protein-L-isoaspartate O-methyltransferase.